A 468-amino-acid chain; its full sequence is Tripartite motif-containing protein 75 (468 aa).

Residues 16–57 (CSICLDYLSDPVTIECGHNFCRSCIQQSWLDLQELFPCPVCR) form an RING-type zinc finger. The B box-type zinc finger occupies 92–133 (EETTLCEKHNQPLSVFCKEDLMVLCPLCTQPPDHQGHHVRPI). Residues cysteine 97, histidine 100, cysteine 119, and histidine 125 each contribute to the Zn(2+) site. Residues 170 to 222 (LELREMVENQRQELSSEFEHLNQFLDREQQAVLSRLAEEEKDNQQKLSANITA) adopt a coiled-coil conformation. The B30.2/SPRY domain occupies 276-468 (CSFPPQYSAL…LRICTGTVCE (193 aa)).

This sequence belongs to the TRIM/RBCC family.

The protein resides in the cytoplasm. It is found in the cytoskeleton. The protein localises to the spindle. In terms of biological role, may play a role in female meiosis. In Homo sapiens (Human), this protein is Tripartite motif-containing protein 75.